Reading from the N-terminus, the 133-residue chain is Small ribosomal subunit protein eS8 (133 aa).

Residues 1–22 (MGFYQGPDNRKITGGLKGKHRD) are disordered.

It belongs to the eukaryotic ribosomal protein eS8 family. In terms of assembly, part of the 30S ribosomal subunit.

The chain is Small ribosomal subunit protein eS8 from Saccharolobus islandicus (strain M.14.25 / Kamchatka #1) (Sulfolobus islandicus).